The following is a 239-amino-acid chain: Small ribosomal subunit protein uS3 (239 aa).

One can recognise a KH type-2 domain in the interval 39–107; the sequence is VRQVLRKKMS…SVHINVIEVR (69 aa). Residues 214 to 239 are disordered; the sequence is GQEKQDDGSRGDRNADRSSRRSREVR. Over residues 216–239 the composition is skewed to basic and acidic residues; that stretch reads EKQDDGSRGDRNADRSSRRSREVR.

This sequence belongs to the universal ribosomal protein uS3 family. In terms of assembly, part of the 30S ribosomal subunit. Forms a tight complex with proteins S10 and S14.

Its function is as follows. Binds the lower part of the 30S subunit head. Binds mRNA in the 70S ribosome, positioning it for translation. The polypeptide is Small ribosomal subunit protein uS3 (Xylella fastidiosa (strain M12)).